The primary structure comprises 127 residues: Protein HI_1253 (127 aa).

The next 4 membrane-spanning stretches (helical) occupy residues 13-33 (VIML…LLVI), 61-81 (LIVS…WWLV), 82-102 (AKFA…SKKV), and 107-127 (SIFF…AYLK).

Belongs to the SirB2 family.

It is found in the cell inner membrane. The protein is Protein HI_1253 of Haemophilus influenzae (strain ATCC 51907 / DSM 11121 / KW20 / Rd).